A 312-amino-acid chain; its full sequence is MKKEIIIGTRSSPLALWQAEFTKAELSKRFPDMNITLKLVKTTGDVLLDSPLSKIGDMGLFTKDIEKHLLAGEIDLAVHSLKDVPTGTPEGLVITSFTEREDTRDVIISKSGKGLMDLPQNAKMATSSLRRMSQLLSLRPDLEIMDIRGNLNTRFKKFDEGDFDAMMLAYAGVYRLEFSDRITEILPHETMLPAVGQGALGIETRTDDAETREIVRVLNDDNTEMCCRAERALLRHLQGGCQIPIGSFGSYIDGTLKLLAFVGSVDGKTGLRNEVTKAVKTPEEAEAVGIELAEILLSMGAEKILADIRKTC.

Cysteine 241 is subject to S-(dipyrrolylmethanemethyl)cysteine.

It belongs to the HMBS family. Monomer. The cofactor is dipyrromethane.

The enzyme catalyses 4 porphobilinogen + H2O = hydroxymethylbilane + 4 NH4(+). The protein operates within porphyrin-containing compound metabolism; protoporphyrin-IX biosynthesis; coproporphyrinogen-III from 5-aminolevulinate: step 2/4. Its pathway is porphyrin-containing compound metabolism; chlorophyll biosynthesis. In terms of biological role, tetrapolymerization of the monopyrrole PBG into the hydroxymethylbilane pre-uroporphyrinogen in several discrete steps. The sequence is that of Porphobilinogen deaminase (hemC) from Chlorobaculum parvum (strain DSM 263 / NCIMB 8327) (Chlorobium vibrioforme subsp. thiosulfatophilum).